Here is a 377-residue protein sequence, read N- to C-terminus: Phosphatidylserine decarboxylase proenzyme, mitochondrial (377 aa).

Residues 1–34 constitute a mitochondrion transit peptide; it reads MMPLFNVLRSARMLPAVSKKVVSPPMMLRSVREL. Over 35 to 61 the chain is Mitochondrial matrix; that stretch reads TNQSKNVYATKEVIIGASQKKKRSWVK. The chain crosses the membrane as a helical span at residues 62–80; that stretch reads WLSVSTLIIGGASYVGYLF. At 81-377 the chain is on the mitochondrial intermembrane side; sequence TPDWREIVDS…YGQSLVADGV (297 aa). Residues aspartate 181, histidine 238, and serine 344 each act as charge relay system; for autoendoproteolytic cleavage activity in the active site. The Schiff-base intermediate with substrate; via pyruvic acid; for decarboxylase activity role is filled by serine 344. Serine 344 is subject to Pyruvic acid (Ser); by autocatalysis.

It belongs to the phosphatidylserine decarboxylase family. PSD-B subfamily. Eukaryotic type I sub-subfamily. In terms of assembly, heterodimer of a large membrane-associated beta subunit and a small pyruvoyl-containing alpha subunit. Requires pyruvate as cofactor. Is synthesized initially as an inactive proenzyme. Formation of the active enzyme involves a self-maturation process in which the active site pyruvoyl group is generated from an internal serine residue via an autocatalytic post-translational modification. Two non-identical subunits are generated from the proenzyme in this reaction, and the pyruvate is formed at the N-terminus of the alpha chain, which is derived from the carboxyl end of the proenzyme. The autoendoproteolytic cleavage occurs by a canonical serine protease mechanism, in which the side chain hydroxyl group of the serine supplies its oxygen atom to form the C-terminus of the beta chain, while the remainder of the serine residue undergoes an oxidative deamination to produce ammonia and the pyruvoyl prosthetic group on the alpha chain. During this reaction, the Ser that is part of the protease active site of the proenzyme becomes the pyruvoyl prosthetic group, which constitutes an essential element of the active site of the mature decarboxylase.

It localises to the mitochondrion inner membrane. The enzyme catalyses a 1,2-diacyl-sn-glycero-3-phospho-L-serine + H(+) = a 1,2-diacyl-sn-glycero-3-phosphoethanolamine + CO2. It functions in the pathway phospholipid metabolism; phosphatidylethanolamine biosynthesis; phosphatidylethanolamine from CDP-diacylglycerol: step 2/2. In terms of biological role, catalyzes the formation of phosphatidylethanolamine (PtdEtn) from phosphatidylserine (PtdSer). Plays a central role in phospholipid metabolism and in the interorganelle trafficking of phosphatidylserine. This chain is Phosphatidylserine decarboxylase proenzyme, mitochondrial, found in Caenorhabditis elegans.